A 422-amino-acid chain; its full sequence is Serine hydroxymethyltransferase 2 (422 aa).

Residues Leu121 and 125–127 each bind (6S)-5,6,7,8-tetrahydrofolate; that span reads GHL. N6-(pyridoxal phosphate)lysine is present on Lys230.

Belongs to the SHMT family. Homodimer. Pyridoxal 5'-phosphate is required as a cofactor.

The protein localises to the cytoplasm. The enzyme catalyses (6R)-5,10-methylene-5,6,7,8-tetrahydrofolate + glycine + H2O = (6S)-5,6,7,8-tetrahydrofolate + L-serine. The protein operates within one-carbon metabolism; tetrahydrofolate interconversion. It functions in the pathway amino-acid biosynthesis; glycine biosynthesis; glycine from L-serine: step 1/1. Catalyzes the reversible interconversion of serine and glycine with tetrahydrofolate (THF) serving as the one-carbon carrier. This reaction serves as the major source of one-carbon groups required for the biosynthesis of purines, thymidylate, methionine, and other important biomolecules. Also exhibits THF-independent aldolase activity toward beta-hydroxyamino acids, producing glycine and aldehydes, via a retro-aldol mechanism. The chain is Serine hydroxymethyltransferase 2 from Agrobacterium fabrum (strain C58 / ATCC 33970) (Agrobacterium tumefaciens (strain C58)).